The sequence spans 243 residues: MQHFFYKLILSYDGTCYYGYQKQPQKITVQQTFEKALKKMTHQNIPTFAASRTDKGVHSQGQTLHFQTTFFLKPTHFQKTLNYLLPPDIRVRQMNFATPNFHARYSAKSKIYQYVFSKKPLNAFNHHFQIFADKLYFDKITKALKFIEGTHNFFAFTSETQPKNFSKTIFQAFLKETSHKYILVFHGNGFLKYMIRFLVGSLIEIGKNKLSLEQFQAMLLGNTTKKATLLAPSKALVLKKIFY.

D54 (nucleophile) is an active-site residue. Y112 is a substrate binding site.

This sequence belongs to the tRNA pseudouridine synthase TruA family. In terms of assembly, homodimer.

The enzyme catalyses uridine(38/39/40) in tRNA = pseudouridine(38/39/40) in tRNA. In terms of biological role, formation of pseudouridine at positions 38, 39 and 40 in the anticodon stem and loop of transfer RNAs. The polypeptide is tRNA pseudouridine synthase A (Onion yellows phytoplasma (strain OY-M)).